Here is a 206-residue protein sequence, read N- to C-terminus: Holliday junction branch migration complex subunit RuvA (206 aa).

A domain I region spans residues 1-63 (MISSLRGDVI…DDAHTLYAFS (63 aa)). A domain II region spans residues 64-142 (TSEQRETFGI…ALEATSGQAT (79 aa)). Positions 143–150 (IGDIAATG) are flexible linker. The domain III stretch occupies residues 151–206 (NDTALQSQVVEALVGLGFTEAKAATAVKKILEEQNGTTDPSSVLREALQRLSGQKR).

This sequence belongs to the RuvA family. As to quaternary structure, homotetramer. Forms an RuvA(8)-RuvB(12)-Holliday junction (HJ) complex. HJ DNA is sandwiched between 2 RuvA tetramers; dsDNA enters through RuvA and exits via RuvB. An RuvB hexamer assembles on each DNA strand where it exits the tetramer. Each RuvB hexamer is contacted by two RuvA subunits (via domain III) on 2 adjacent RuvB subunits; this complex drives branch migration. In the full resolvosome a probable DNA-RuvA(4)-RuvB(12)-RuvC(2) complex forms which resolves the HJ.

Its subcellular location is the cytoplasm. Functionally, the RuvA-RuvB-RuvC complex processes Holliday junction (HJ) DNA during genetic recombination and DNA repair, while the RuvA-RuvB complex plays an important role in the rescue of blocked DNA replication forks via replication fork reversal (RFR). RuvA specifically binds to HJ cruciform DNA, conferring on it an open structure. The RuvB hexamer acts as an ATP-dependent pump, pulling dsDNA into and through the RuvAB complex. HJ branch migration allows RuvC to scan DNA until it finds its consensus sequence, where it cleaves and resolves the cruciform DNA. This chain is Holliday junction branch migration complex subunit RuvA, found in Corynebacterium urealyticum (strain ATCC 43042 / DSM 7109).